We begin with the raw amino-acid sequence, 328 residues long: 5,10-methylenetetrahydromethanopterin reductase (328 aa).

Belongs to the mer family.

Its subcellular location is the cytoplasm. The enzyme catalyses 5-methyl-5,6,7,8-tetrahydromethanopterin + oxidized coenzyme F420-(gamma-L-Glu)(n) + H(+) = 5,10-methylenetetrahydromethanopterin + reduced coenzyme F420-(gamma-L-Glu)(n). It functions in the pathway one-carbon metabolism; methanogenesis from CO(2); methyl-coenzyme M from 5,10-methylene-5,6,7,8-tetrahydromethanopterin: step 1/2. Catalyzes the reversible reduction of methylene-H(4)MPT to methyl-H(4)MPT. The sequence is that of 5,10-methylenetetrahydromethanopterin reductase from Methanosarcina acetivorans (strain ATCC 35395 / DSM 2834 / JCM 12185 / C2A).